A 294-amino-acid polypeptide reads, in one-letter code: rRNA 2'-O-methyltransferase fibrillarin (294 aa).

The segment at 1-62 (MGKDFKSGGG…GKFGAKGPRG (62 aa)) is disordered. Gly residues predominate over residues 20 to 56 (GPGGPGGRPFNKGPGGPGGPGGKFGGGRPGGPGGKFG). Residues R27, R47, and R61 each carry the asymmetric dimethylarginine modification. S-adenosyl-L-methionine contacts are provided by residues 151-152 (TT), 170-171 (EF), 195-196 (DA), and 215-218 (DVAQ).

The protein belongs to the methyltransferase superfamily. Fibrillarin family. As to quaternary structure, component of box C/D small nucleolar ribonucleoprotein (snoRNP) particles. It is associated with the U3, U8 and U13 small nuclear RNAs. In terms of processing, by homology to other fibrillarins, some or all of the N-terminal domain arginines are modified to asymmetric dimethylarginine (DMA).

The protein resides in the nucleus. It is found in the nucleolus. It catalyses the reaction L-glutaminyl-[histone H2A] + S-adenosyl-L-methionine = N(5)-methyl-L-glutaminyl-[histone H2A] + S-adenosyl-L-homocysteine + H(+). In terms of biological role, S-adenosyl-L-methionine-dependent methyltransferase that has the ability to methylate both RNAs and proteins. Involved in pre-rRNA processing. Utilizes the methyl donor S-adenosyl-L-methionine to catalyze the site-specific 2'-hydroxyl methylation of ribose moieties in pre-ribosomal RNA. Site specificity is provided by a guide RNA that base pairs with the substrate. Methylation occurs at a characteristic distance from the sequence involved in base pairing with the guide RNA. Also acts as a protein methyltransferase by mediating methylation of 'Gln-105' of histone H2A (H2AQ105me), a modification that impairs binding of the FACT complex and is specifically present at 35S ribosomal DNA locus. The protein is rRNA 2'-O-methyltransferase fibrillarin (FIB) of Tetrahymena thermophila.